The chain runs to 487 residues: Aspartyl/glutamyl-tRNA(Asn/Gln) amidotransferase subunit B (487 aa).

The protein belongs to the GatB/GatE family. GatB subfamily. As to quaternary structure, heterotrimer of A, B and C subunits.

The catalysed reaction is L-glutamyl-tRNA(Gln) + L-glutamine + ATP + H2O = L-glutaminyl-tRNA(Gln) + L-glutamate + ADP + phosphate + H(+). It catalyses the reaction L-aspartyl-tRNA(Asn) + L-glutamine + ATP + H2O = L-asparaginyl-tRNA(Asn) + L-glutamate + ADP + phosphate + 2 H(+). Functionally, allows the formation of correctly charged Asn-tRNA(Asn) or Gln-tRNA(Gln) through the transamidation of misacylated Asp-tRNA(Asn) or Glu-tRNA(Gln) in organisms which lack either or both of asparaginyl-tRNA or glutaminyl-tRNA synthetases. The reaction takes place in the presence of glutamine and ATP through an activated phospho-Asp-tRNA(Asn) or phospho-Glu-tRNA(Gln). The polypeptide is Aspartyl/glutamyl-tRNA(Asn/Gln) amidotransferase subunit B (Acidiphilium cryptum (strain JF-5)).